The sequence spans 332 residues: MFTVSKKSLQASRNAFSPLNNSKRTIVFTAIAAFGDLLIGKDVRLADAMEKGNLHNKNGEYEHKMEQRTQERLNALRNTRPIEPNYEGHVPLWWYERMMLFGISGLKSYFHPENGENIVQLGEATALPCFLESLKRTMLLDKTGRRILQDRPNITSESLDMERLSKMDKNSVGYTYYKWLMKEGVSPDTRAPVTYIDDPVHAFIFKRYRQCHDFYHAINDLPIIIEGEIAVKAFEASNIGVPMAALGALLAPLRLKKVQKERLYSIYLPWAVKAGLNCKPLINVYWEEILDKDIDELRRELNVTPPPDLRKIRKERAKQRKQFKLKYETYEK.

Residues 1–16 constitute a mitochondrion transit peptide; the sequence is MFTVSKKSLQASRNAF. Residues His-212, Asp-213, His-216, and Glu-228 each coordinate Zn(2+).

This sequence belongs to the COQ4 family. As to quaternary structure, component of a multi-subunit COQ enzyme complex, composed of at least COQ3, COQ4, COQ5, COQ6, COQ7 and COQ9. It depends on Zn(2+) as a cofactor.

The protein localises to the mitochondrion inner membrane. The catalysed reaction is a 4-hydroxy-3-methoxy-5-(all-trans-polyprenyl)benzoate + H(+) = a 2-methoxy-6-(all-trans-polyprenyl)phenol + CO2. The protein operates within cofactor biosynthesis; ubiquinone biosynthesis. Its function is as follows. Lyase that catalyzes the C1-decarboxylation of 4-hydroxy-3-methoxy-5-(all-trans-polyprenyl)benzoic acid into 2-methoxy-6-(all-trans-polyprenyl)phenol during ubiquinone biosynthesis. The chain is Ubiquinone biosynthesis protein COQ4, mitochondrial from Kluyveromyces lactis (strain ATCC 8585 / CBS 2359 / DSM 70799 / NBRC 1267 / NRRL Y-1140 / WM37) (Yeast).